Reading from the N-terminus, the 233-residue chain is Small ribosomal subunit protein uS2 (233 aa).

It belongs to the universal ribosomal protein uS2 family.

The sequence is that of Small ribosomal subunit protein uS2 from Clostridium botulinum (strain Hall / ATCC 3502 / NCTC 13319 / Type A).